The sequence spans 308 residues: Porphobilinogen deaminase (308 aa).

Cys243 carries the S-(dipyrrolylmethanemethyl)cysteine modification.

It belongs to the HMBS family. Monomer. It depends on dipyrromethane as a cofactor.

It catalyses the reaction 4 porphobilinogen + H2O = hydroxymethylbilane + 4 NH4(+). It participates in porphyrin-containing compound metabolism; protoporphyrin-IX biosynthesis; coproporphyrinogen-III from 5-aminolevulinate: step 2/4. In terms of biological role, tetrapolymerization of the monopyrrole PBG into the hydroxymethylbilane pre-uroporphyrinogen in several discrete steps. This Mesorhizobium japonicum (strain LMG 29417 / CECT 9101 / MAFF 303099) (Mesorhizobium loti (strain MAFF 303099)) protein is Porphobilinogen deaminase.